The primary structure comprises 288 residues: MSNLKQLRTRIKSVKSTQKITKAMQLVSASKMTKIKTQIANSNFYIEAINKMMSDICSMTSCELSIEEQKFFNTMPSKINLLIVMTSERGLCGMFNYSIIKQVKNDIKELTNKGEQIKLIIIGKKGYEALKRQYANYINSYFEFTKIHSENLILQVKEKIMCAVKNLEVSNCIIYFNKFKNAMTQIPTKQKILPIEKHQDYSVVANDYFEYEGKNLISNLINLYVHAKINYALLQNIVSEEGARMTAMENATNNANDLISKLVLKLNRSRQTIITTELIEIIAGAEAV.

Belongs to the ATPase gamma chain family. As to quaternary structure, F-type ATPases have 2 components, CF(1) - the catalytic core - and CF(0) - the membrane proton channel. CF(1) has five subunits: alpha(3), beta(3), gamma(1), delta(1), epsilon(1). CF(0) has three main subunits: a, b and c.

Its subcellular location is the cell inner membrane. In terms of biological role, produces ATP from ADP in the presence of a proton gradient across the membrane. The gamma chain is believed to be important in regulating ATPase activity and the flow of protons through the CF(0) complex. The sequence is that of ATP synthase gamma chain from Rickettsia prowazekii (strain Madrid E).